Here is a 287-residue protein sequence, read N- to C-terminus: Myoblast determination protein 1 homolog B (287 aa).

The 52-residue stretch at 96-147 folds into the bHLH domain; that stretch reads DRRRAATMRERRRLSKVNDAFETLKRCTSTNPNQRLPKVDILRNAISYIDSL. 2 disordered regions span residues 161–202 and 231–277; these read NMEH…FYTD and QSPS…QLSH. Residues 168 to 188 show a composition bias toward low complexity; the sequence is DSDASSPSSNCSDGMNSPPCS. Residues 267 to 277 show a composition bias toward polar residues; sequence SPGNSCTQLSH.

As to quaternary structure, efficient DNA binding requires dimerization with another bHLH protein.

It localises to the nucleus. May act as a transcriptional activator that promotes transcription of muscle-specific target genes and plays a role in muscle differentiation. The sequence is that of Myoblast determination protein 1 homolog B (myod1-b) from Xenopus laevis (African clawed frog).